A 407-amino-acid polypeptide reads, in one-letter code: Imidazolonepropionase (407 aa).

Positions 74 and 76 each coordinate Fe(3+). 2 residues coordinate Zn(2+): His74 and His76. The 4-imidazolone-5-propanoate site is built by Arg83, Tyr146, and His179. An N-formimidoyl-L-glutamate-binding site is contributed by Tyr146. His244 contributes to the Fe(3+) binding site. Position 244 (His244) interacts with Zn(2+). Residue Gln247 participates in 4-imidazolone-5-propanoate binding. Residue Asp319 participates in Fe(3+) binding. Asp319 contacts Zn(2+). N-formimidoyl-L-glutamate contacts are provided by Asn321 and Gly323. Residue Thr324 participates in 4-imidazolone-5-propanoate binding.

This sequence belongs to the metallo-dependent hydrolases superfamily. HutI family. It depends on Zn(2+) as a cofactor. Fe(3+) is required as a cofactor.

The protein resides in the cytoplasm. It carries out the reaction 4-imidazolone-5-propanoate + H2O = N-formimidoyl-L-glutamate. It functions in the pathway amino-acid degradation; L-histidine degradation into L-glutamate; N-formimidoyl-L-glutamate from L-histidine: step 3/3. Its function is as follows. Catalyzes the hydrolytic cleavage of the carbon-nitrogen bond in imidazolone-5-propanoate to yield N-formimidoyl-L-glutamate. It is the third step in the universal histidine degradation pathway. The protein is Imidazolonepropionase of Salmonella typhimurium (strain LT2 / SGSC1412 / ATCC 700720).